The chain runs to 530 residues: Bifunctional purine biosynthesis protein PurH (530 aa).

In terms of domain architecture, MGS-like spans 1-149 (MASDFLPVHR…KNFARVAVAT (149 aa)).

Belongs to the PurH family.

It catalyses the reaction (6R)-10-formyltetrahydrofolate + 5-amino-1-(5-phospho-beta-D-ribosyl)imidazole-4-carboxamide = 5-formamido-1-(5-phospho-D-ribosyl)imidazole-4-carboxamide + (6S)-5,6,7,8-tetrahydrofolate. The catalysed reaction is IMP + H2O = 5-formamido-1-(5-phospho-D-ribosyl)imidazole-4-carboxamide. Its pathway is purine metabolism; IMP biosynthesis via de novo pathway; 5-formamido-1-(5-phospho-D-ribosyl)imidazole-4-carboxamide from 5-amino-1-(5-phospho-D-ribosyl)imidazole-4-carboxamide (10-formyl THF route): step 1/1. It participates in purine metabolism; IMP biosynthesis via de novo pathway; IMP from 5-formamido-1-(5-phospho-D-ribosyl)imidazole-4-carboxamide: step 1/1. This Xylella fastidiosa (strain M12) protein is Bifunctional purine biosynthesis protein PurH.